Consider the following 468-residue polypeptide: Protein translocase subunit SecY (468 aa).

The Cytoplasmic segment spans residues Met-1 to Pro-20. Residues Lys-21–Pro-47 form a helical membrane-spanning segment. Over Val-48–Tyr-58 the chain is Extracellular. The helical intramembrane region spans Phe-59–Leu-66. Residues Phe-59–Ile-87 form a discontinuously helical membrane-spanning segment. An intramembrane segment occupies Ala-67–Ile-78. Positions Gly-79–Ile-87 form an intramembrane region, helical. Topologically, residues Leu-88–Arg-108 are cytoplasmic. A helical membrane pass occupies residues Phe-109–Gly-133. The Extracellular portion of the chain corresponds to Ala-134 to Tyr-144. A helical transmembrane segment spans residues Thr-145–Ser-169. Topologically, residues Lys-170–Ser-175 are cytoplasmic. Residues Gly-176–Leu-194 form a helical membrane-spanning segment. Residues Asn-195–Pro-239 are Extracellular-facing. The chain crosses the membrane as a helical span at residues Asp-240–Arg-261. Residues Val-262–Ser-285 are Cytoplasmic-facing. The helical transmembrane segment at Asn-286–Asp-307 threads the bilayer. At Arg-308–Val-346 the chain is on the extracellular side. Residues Arg-347–Trp-366 traverse the membrane as a helical segment. Residues Val-367–Val-409 lie on the Cytoplasmic side of the membrane. The helical transmembrane segment at Thr-410–Gly-428 threads the bilayer. Over Ala-429 to Gly-431 the chain is Extracellular. Residues Thr-432–Phe-446 form a helical membrane-spanning segment. Residues Tyr-447–Gly-468 lie on the Cytoplasmic side of the membrane.

This sequence belongs to the SecY/SEC61-alpha family. In terms of assembly, component of the Sec protein translocase complex. Heterotrimer consisting of alpha (SecY), beta (SecG) and gamma (SecE) subunits. The heterotrimers can form oligomers, although 1 heterotrimer is thought to be able to translocate proteins. Interacts with the ribosome. May interact with SecDF, and other proteins may be involved.

Its subcellular location is the cell membrane. Functionally, the central subunit of the protein translocation channel SecYEG. Consists of two halves formed by TMs 1-5 and 6-10. These two domains form a lateral gate at the front which open onto the bilayer between TMs 2 and 7, and are clamped together by SecE at the back. The channel is closed by both a pore ring composed of hydrophobic SecY resides and a short helix (helix 2A) on the extracellular side of the membrane which forms a plug. The plug probably moves laterally to allow the channel to open. The ring and the pore may move independently. The chain is Protein translocase subunit SecY from Pyrococcus horikoshii (strain ATCC 700860 / DSM 12428 / JCM 9974 / NBRC 100139 / OT-3).